A 643-amino-acid chain; its full sequence is DNA polymerase III subunit tau (643 aa).

Gly45–Thr52 serves as a coordination point for ATP. Zn(2+)-binding residues include Cys64, Cys73, Cys76, and Cys79. The interval Thr385 to Pro404 is disordered.

The protein belongs to the DnaX/STICHEL family. The DNA polymerase III holoenzyme complex contains at least 10 different subunits organized into 3 functionally essential subassemblies: the Pol III core, the beta sliding clamp processivity factor and the clamp-loading complex. The Pol III core (subunits alpha, epsilon and theta) contains the polymerase and the 3'-5' exonuclease proofreading activities. The polymerase is tethered to the template via the dimeric beta sliding clamp processivity factor. The clamp-loading complex (also called gamma complex) assembles the beta sliding clamp onto the primed template and plays a central role in the organization and communication at the replication fork. The clamp-loading complex contains delta, delta', psi and chi, and 3 copies of either or both of two different DnaX proteins, gamma and tau. The DNA replisome complex has a single clamp loader (3 tau and 1 each of delta, delta', psi and chi subunits) which binds 3 Pol III cores (1 core on the leading strand and 2 on the lagging strand) each with a beta sliding clamp dimer. Additional proteins in the replisome are other copies of gamma, psi and chi, Ssb, DNA helicase and RNA primase. The clamp loader hydrolyzes ATP to assemble the beta processivity factor onto the primed template and plays a central role in the organization and communication at the replication fork; the minimal complex to load the beta sliding clamp on DNA is delta, delta', gamma.

The catalysed reaction is DNA(n) + a 2'-deoxyribonucleoside 5'-triphosphate = DNA(n+1) + diphosphate. Functionally, part of the beta sliding clamp loading complex, which hydrolyzes ATP to load the beta clamp onto primed DNA to form the DNA replication pre-initiation complex. DNA polymerase III is a complex, multichain enzyme responsible for most of the replicative synthesis in bacteria. This DNA polymerase also exhibits 3'-5' exonuclease activity. The gamma complex (gamma(3),delta,delta') is thought to load beta dimers onto DNA by binding ATP which alters the complex's conformation so it can bind beta sliding clamp dimers and open them at one interface. Primed DNA is recognized, ATP is hydrolyzed releasing the gamma complex and closing the beta sliding clamp ring around the primed DNA. Its function is as follows. Serves as a scaffold to trimerize the core complex. Interacts with the delta and delta' subunits to transfer the beta subunit on the DNA. Interacts with ATP, drives ATP-induced conformational changes in the gamma complex that opens the beta sliding clamp ring. After loading of primed DNA ATP is hydrolyzed and the beta sliding clamp ring closes. This chain is DNA polymerase III subunit tau (dnaX), found in Escherichia coli (strain K12).